A 306-amino-acid polypeptide reads, in one-letter code: UDP-3-O-acyl-N-acetylglucosamine deacetylase (306 aa).

Residues histidine 79, histidine 238, and aspartate 242 each contribute to the Zn(2+) site. Catalysis depends on histidine 265, which acts as the Proton donor.

This sequence belongs to the LpxC family. Zn(2+) serves as cofactor.

It catalyses the reaction a UDP-3-O-[(3R)-3-hydroxyacyl]-N-acetyl-alpha-D-glucosamine + H2O = a UDP-3-O-[(3R)-3-hydroxyacyl]-alpha-D-glucosamine + acetate. Its pathway is glycolipid biosynthesis; lipid IV(A) biosynthesis; lipid IV(A) from (3R)-3-hydroxytetradecanoyl-[acyl-carrier-protein] and UDP-N-acetyl-alpha-D-glucosamine: step 2/6. Its function is as follows. Catalyzes the hydrolysis of UDP-3-O-myristoyl-N-acetylglucosamine to form UDP-3-O-myristoylglucosamine and acetate, the committed step in lipid A biosynthesis. The sequence is that of UDP-3-O-acyl-N-acetylglucosamine deacetylase from Shewanella frigidimarina (strain NCIMB 400).